A 304-amino-acid polypeptide reads, in one-letter code: Acetyl-coenzyme A carboxylase carboxyl transferase subunit beta (304 aa).

Residues 23-292 form the CoA carboxyltransferase N-terminal domain; it reads VWTKCDSCGQ…PNPDAPREGV (270 aa). Positions 27, 30, 46, and 49 each coordinate Zn(2+). The segment at 27-49 adopts a C4-type zinc-finger fold; that stretch reads CDSCGQVLYRAELERNLEVCPKC. Positions 284-304 are disordered; sequence NPDAPREGVVVPPAPDQESEV.

The protein belongs to the AccD/PCCB family. In terms of assembly, acetyl-CoA carboxylase is a heterohexamer composed of biotin carboxyl carrier protein (AccB), biotin carboxylase (AccC) and two subunits each of ACCase subunit alpha (AccA) and ACCase subunit beta (AccD). Zn(2+) serves as cofactor.

It is found in the cytoplasm. It carries out the reaction N(6)-carboxybiotinyl-L-lysyl-[protein] + acetyl-CoA = N(6)-biotinyl-L-lysyl-[protein] + malonyl-CoA. It participates in lipid metabolism; malonyl-CoA biosynthesis; malonyl-CoA from acetyl-CoA: step 1/1. Functionally, component of the acetyl coenzyme A carboxylase (ACC) complex. Biotin carboxylase (BC) catalyzes the carboxylation of biotin on its carrier protein (BCCP) and then the CO(2) group is transferred by the transcarboxylase to acetyl-CoA to form malonyl-CoA. This Salmonella paratyphi A (strain ATCC 9150 / SARB42) protein is Acetyl-coenzyme A carboxylase carboxyl transferase subunit beta.